Consider the following 1373-residue polypeptide: DNA-directed RNA polymerase subunit beta'' (1373 aa).

Positions 220, 293, 300, and 303 each coordinate Zn(2+).

The protein belongs to the RNA polymerase beta' chain family. RpoC2 subfamily. In plastids the minimal PEP RNA polymerase catalytic core is composed of four subunits: alpha, beta, beta', and beta''. When a (nuclear-encoded) sigma factor is associated with the core the holoenzyme is formed, which can initiate transcription. The cofactor is Zn(2+).

It localises to the plastid. The protein resides in the chloroplast. The catalysed reaction is RNA(n) + a ribonucleoside 5'-triphosphate = RNA(n+1) + diphosphate. DNA-dependent RNA polymerase catalyzes the transcription of DNA into RNA using the four ribonucleoside triphosphates as substrates. The polypeptide is DNA-directed RNA polymerase subunit beta'' (Lepidium virginicum (Virginia pepperweed)).